The following is a 98-amino-acid chain: NADH-ubiquinone oxidoreductase chain 4L (98 aa).

The next 3 membrane-spanning stretches (helical) occupy residues 1-21, 29-49, and 61-81; these read MSITYMNMFMAFTISLLGLLM, SLLCLEGMMLSLFVMMTMAIL, and IILLVFAACEAALGLSLLVMV.

It belongs to the complex I subunit 4L family. In terms of assembly, core subunit of respiratory chain NADH dehydrogenase (Complex I) which is composed of 45 different subunits.

It is found in the mitochondrion inner membrane. The enzyme catalyses a ubiquinone + NADH + 5 H(+)(in) = a ubiquinol + NAD(+) + 4 H(+)(out). Core subunit of the mitochondrial membrane respiratory chain NADH dehydrogenase (Complex I) which catalyzes electron transfer from NADH through the respiratory chain, using ubiquinone as an electron acceptor. Part of the enzyme membrane arm which is embedded in the lipid bilayer and involved in proton translocation. In Mesophylla macconnelli (MacConnell's bat), this protein is NADH-ubiquinone oxidoreductase chain 4L (MT-ND4L).